Reading from the N-terminus, the 1014-residue chain is Chondroitin sulfate ABC exolyase (1014 aa).

A signal peptide spans 1–14 (MLILSFLCPAFLNA). Ca(2+)-binding residues include Ser-24, Glu-26, Asp-50, His-53, and Asp-161. Residues His-345 and His-454 each act as proton acceptor in the active site. Tyr-461 serves as the catalytic Proton donor.

It belongs to the polysaccharide lyase 8 family. Monomer. Ca(2+) serves as cofactor. Mg(2+) is required as a cofactor.

It localises to the periplasm. The enzyme catalyses Exolytic removal of Delta(4)-unsaturated disaccharide residues from the non-reducing ends of both polymeric chondroitin/dermatan sulfates and their oligosaccharide fragments.. Specific activity for chondroitin sulfate substrates increases moderately (2-fold) while an increase of 25-fold is observed for dermatan sulfate as substrate upon addition of Ca(2+) or Mg(2+) ions. Increasing the concentration of Na(+), K(+) or Cs(+) chloride from 0 to 0.1 M, increases the activity against all substrates. Further increases in salt concentration reduces the activity dramatically, with 50% inhibition occurring at 0.15 M and nearly complete inhibition at 0.4 M salt. The addition of 10 mM Ca(2+) or Mg(2+) ions increases the activity against chondroitin 4- and 6-sulfates by 2-3-fold, while the activity against dermatan sulfate increases much more significantly by 50-fold. Addition of Mn(2+) and Zn(2+) reduces activity against chondroitin sulfate substrates, but increases the activity against dermatan sulfate. Increasing the concentration of CaCl(2) with both chondroitin 4- and 6-sulfates from 0 to 0.04 M increases the activity. A further increase reduces activity, with 50% inhibition at 0.065-0.085 M and a complete inhibition of the reaction at 0.2 M. In case of dermatan sulfate, the addition of low concentration of CaCl(2) dramatically increases the activity from the basal level. The maximal activity is reached at 0.01 M CaCl(2). Functionally, broad-specificity glycosaminoglycan lyase, which acts in an exolytic fashion degrading chondroitin sulfates and dermatan sulfate to yield only disaccharide products. Has a preference for chondroitin 4-sulfate over chondroitin 6-sulfate. Has extremely low activity against hyaluronic acid. Is not active against acharan sulfate, heparin or heparan sulfate. This is Chondroitin sulfate ABC exolyase (chonabc) from Bacteroides thetaiotaomicron.